We begin with the raw amino-acid sequence, 287 residues long: Nucleoside kinase (287 aa).

Positions 13, 28, 38, and 42 each coordinate substrate. An ATP-binding site is contributed by Q102. Residues S104 and Q150 each contribute to the substrate site. ATP contacts are provided by residues N173 and 196–201; that span reads TNGERG. Residue D227 coordinates substrate. Residue D227 is the Proton acceptor of the active site.

It belongs to the carbohydrate kinase PfkB family. In terms of assembly, homodimer. The cofactor is Mg(2+). It depends on Co(2+) as a cofactor.

It catalyses the reaction adenosine + ATP = AMP + ADP + H(+). The catalysed reaction is cytidine + ATP = CMP + ADP + H(+). It carries out the reaction guanosine + ATP = GMP + ADP + H(+). The enzyme catalyses inosine + ATP = IMP + ADP + H(+). Functionally, nucleoside kinase with broad substrate specificity. Catalyzes the phosphorylation of a variety of nucleosides to the corresponding nucleoside 5'-mono-phosphate in the presence of phosphate donors and divalent cations. Displays the most efficient activity with guanosine, followed by inosine, cytidine, and adenosine. Negligible enzymatic activity is detected with thymidine, uridine, and 2-deoxyadenosine. ATP is the most efficient phosphate donor, but can also use GTP and ITP. Shows no sugar kinase activity, since it is unable to phosphorylate ribose, fructose-1-phosphate, or fructose-6-phosphate. The sequence is that of Nucleoside kinase from Thermoplasma acidophilum (strain ATCC 25905 / DSM 1728 / JCM 9062 / NBRC 15155 / AMRC-C165).